Consider the following 731-residue polypeptide: Polyadenylate-binding protein, cytoplasmic and nuclear (731 aa).

Residues Met1 to Ala10 are compositionally biased toward polar residues. The tract at residues Met1–Pro51 is disordered. Residues Ala17–Val39 are compositionally biased toward low complexity. RRM domains follow at residues Ala54 to Arg132, Gly142 to Ser219, Thr235 to Lys312, and Val338 to Arg472. Disordered stretches follow at residues Val369–Lys429 and Gly603–Thr665. The segment covering Gly616–Arg627 has biased composition (gly residues). The segment covering Gln645–Gly656 has biased composition (low complexity). Residues Ala658 to Thr731 form the PABC domain.

This sequence belongs to the polyadenylate-binding protein type-1 family.

The protein resides in the cytoplasm. It is found in the nucleus. Binds the poly(A) tail of mRNA. Appears to be an important mediator of the multiple roles of the poly(A) tail in mRNA biogenesis, stability and translation. In the nucleus, involved in both mRNA cleavage and polyadenylation. Is also required for efficient mRNA export to the cytoplasm. Acts in concert with a poly(A)-specific nuclease (PAN) to affect poly(A) tail shortening, which may occur concomitantly with either nucleocytoplasmic mRNA transport or translational initiation. In the cytoplasm, stimulates translation initiation and regulates mRNA decay through translation termination-coupled poly(A) shortening, probably mediated by PAN. The protein is Polyadenylate-binding protein, cytoplasmic and nuclear (pab1) of Aspergillus niger (strain ATCC MYA-4892 / CBS 513.88 / FGSC A1513).